The following is a 345-amino-acid chain: Anthranilate phosphoribosyltransferase (345 aa).

5-phospho-alpha-D-ribose 1-diphosphate-binding positions include G84, G87–D88, T92, N94–T97, K112–S120, and S124. Anthranilate is bound at residue G84. T96 contributes to the Mg(2+) binding site. N115 lines the anthranilate pocket. Position 170 (R170) interacts with anthranilate. Mg(2+) is bound by residues D228 and E229.

Belongs to the anthranilate phosphoribosyltransferase family. In terms of assembly, homodimer. Requires Mg(2+) as cofactor.

It catalyses the reaction N-(5-phospho-beta-D-ribosyl)anthranilate + diphosphate = 5-phospho-alpha-D-ribose 1-diphosphate + anthranilate. It participates in amino-acid biosynthesis; L-tryptophan biosynthesis; L-tryptophan from chorismate: step 2/5. Its function is as follows. Catalyzes the transfer of the phosphoribosyl group of 5-phosphorylribose-1-pyrophosphate (PRPP) to anthranilate to yield N-(5'-phosphoribosyl)-anthranilate (PRA). This Corynebacterium aurimucosum (strain ATCC 700975 / DSM 44827 / CIP 107346 / CN-1) (Corynebacterium nigricans) protein is Anthranilate phosphoribosyltransferase.